A 21-amino-acid polypeptide reads, in one-letter code: Peptide PGLa-R6 (21 aa).

A Leucine amide modification is found at Leu21.

In terms of tissue distribution, expressed by the skin glands.

It localises to the secreted. Antimicrobial peptide. In Xenopus ruwenzoriensis (Uganda clawed frog), this protein is Peptide PGLa-R6.